The sequence spans 46 residues: Light-harvesting protein B800/850/890 alpha-1 chain (46 aa).

Residues 1 to 12 (MWRLWKLYDPRR) are Cytoplasmic-facing. A helical transmembrane segment spans residues 13–33 (VLIGIFSWLAVLALVIHFILL). Residue His-29 coordinates a bacteriochlorophyll. Residues 34–46 (STDRFNWVGGAAN) lie on the Periplasmic side of the membrane.

Belongs to the antenna complex alpha subunit family. The core complex is formed by different alpha and beta chains, binding bacteriochlorophyll molecules, and arranged most probably in tetrameric structures disposed around the reaction center. The non-pigmented gamma chains may constitute additional components.

It is found in the cell inner membrane. In terms of biological role, antenna complexes are light-harvesting systems, which transfer the excitation energy to the reaction centers. In Halorhodospira halophila (strain DSM 244 / SL1) (Ectothiorhodospira halophila (strain DSM 244 / SL1)), this protein is Light-harvesting protein B800/850/890 alpha-1 chain.